The chain runs to 500 residues: MTSFESFERGWKAGQNQIVYARLTADLDTPVSLMLKLAEARTDTFMLESVTGGEIRGRYSVVGMKPDLIWQCHGQDSRINREARFDRQAFQPLEGHPLETLRALIAESRIEMPADLPPIAAGLFGYLGYDMIRLVEHLPGINPDPLGLPDAVLMRPSVVAVLDGVKGEVTVVAPAWVSSGLSARAAYAQAAERVMDALRDLDRAPPAQRDFGEVAQVGEMRSNFTHEGYKAAVEKAKDYIRAGDIFQVVPSQRWAQDFRLPPFALYRSLRKTNPSPFMFFFNFGGFQVVGASPEILVRLRDREVTVRPIAGTRKRGATPEEDRALEADLLSDKKELAEHLMLLDLGRNDVGRVAKIGTVRPTEKFIIERYSHVMHIVSNVVGEIAEGEDALSALLAGLPAGTVSGAPKVRAMEIIDELEPEKRGVYGGGVGYFAANGEMDFCIALRTAVLKDETLYIQSGGGVVYDSDPEAEYQETVNKARALRRAAEDAGLFARRAGNG.

L-tryptophan is bound by residues Ser-49 and 276–278 (PFM). Residue 311-312 (GT) coordinates chorismate. A Mg(2+)-binding site is contributed by Glu-338. Residues Tyr-426, Arg-446, 460 to 462 (GGG), and Gly-462 each bind chorismate. Position 475 (Glu-475) interacts with Mg(2+).

It belongs to the anthranilate synthase component I family. Heterotetramer consisting of two non-identical subunits: a beta subunit (TrpG) and a large alpha subunit (TrpE). It depends on Mg(2+) as a cofactor.

It catalyses the reaction chorismate + L-glutamine = anthranilate + pyruvate + L-glutamate + H(+). Its pathway is amino-acid biosynthesis; L-tryptophan biosynthesis; L-tryptophan from chorismate: step 1/5. With respect to regulation, feedback inhibited by tryptophan. Functionally, part of a heterotetrameric complex that catalyzes the two-step biosynthesis of anthranilate, an intermediate in the biosynthesis of L-tryptophan. In the first step, the glutamine-binding beta subunit (TrpG) of anthranilate synthase (AS) provides the glutamine amidotransferase activity which generates ammonia as a substrate that, along with chorismate, is used in the second step, catalyzed by the large alpha subunit of AS (TrpE) to produce anthranilate. In the absence of TrpG, TrpE can synthesize anthranilate directly from chorismate and high concentrations of ammonia. The chain is Anthranilate synthase component 1 (trpE) from Cereibacter sphaeroides (strain ATCC 17023 / DSM 158 / JCM 6121 / CCUG 31486 / LMG 2827 / NBRC 12203 / NCIMB 8253 / ATH 2.4.1.) (Rhodobacter sphaeroides).